The sequence spans 970 residues: MRFKKRFSLDWILKIGTILGLVCLGLFGVIFGSYKLLNDSRLGAVFNGSTTTTVYFLNHKSTNNTSLDPQQTKPTNGIENITNIDSFLDGVEKSYANSLFIQGFSSVNITKNTNDKTASELDNIDKSWLVNGGLPSVTLTFEQNREQAKTRQRKRQVDAQVRRNAISSVEHNYQLSLETTDGVVLFDSLDNNFINASIRAVVPQNTSVNSALTFEYKLNKNVVTKESLHTDFLDFINSKNLSSSDYNTGNGQASVEGNGKFFKQNANGTSSSGNKTLVLWKDKQGALNYVRNIFNVVEGSSDYLTFNEREKSLWEFLHAKGSFASGDNLFLNTDANGASPIKKASDITLKNLYYIYAAPNHFSAVASNSNDNNNQNNNNNNNSSDVITVSNSADTRKLRSADSSGFSGLFHNYIISEIRTEDPVSKTGDPVKINPTLQSFLDTNNQRIEYGGNIKFQVGNFLSSDGTYTPPNFVTAATVKELLTNPFPTAATIATAKTSLVNAPLANTITDVSNFASSFIAFGIIVLIAAVLLTLRYKLLGLYKALALGLSVVSSLVIFSAVGGVVDVFSFVGIFFVIAINLINLLNLGELFLRNIRNNASIIESWKLCLKRSFFANLEFHITWLISALVVIYLSNYQVQQLANLMAISAITSYFFSYGISIVLISLFVSSESGANWKLFLYQKDAKALTKTSSNYSLLSSTSDLNTDFFITKNQHDFFLKNNWKFLFVWLILLAIGVVMLVLYLVQPNLLGEFLAADVESSNGIIAGIGIVSLLYLAYCLIRYGVAYCLSYLVSFILLCSGLFAVMYLTNYLFSIDQSTIQLITFVYLFWLFFAAKVSQTTTWTYFYWFKRSLKDKVFIKNLFNDNFNSQWKIDLIESSSLVFIFIIYSGFNFGGIDGNFNLVIFYLIAIVGLFDVATAFLPMFCFGLINGWLSPFNYVHSRLSLKHKKHPFKEIDQIEEQLIAGINSF.

Residues 11-31 traverse the membrane as a helical segment; it reads WILKIGTILGLVCLGLFGVIF. Residues 366–387 form a disordered region; it reads ASNSNDNNNQNNNNNNNSSDVI. A compositionally biased stretch (low complexity) spans 367 to 387; it reads SNSNDNNNQNNNNNNNSSDVI. 11 helical membrane-spanning segments follow: residues 515 to 535, 537 to 557, 558 to 578, 614 to 634, 645 to 665, 726 to 746, 762 to 782, 789 to 809, 816 to 836, 877 to 897, and 903 to 923; these read FASS…LLTL, YKLL…SSLV, IFSA…FFVI, FFAN…VIYL, LMAI…IVLI, FLFV…LYLV, SNGI…YCLI, CLSY…VMYL, IDQS…FFAA, IESS…FGGI, and LVIF…AFLP.

The protein localises to the cell membrane. This is an uncharacterized protein from Mycoplasma genitalium (strain ATCC 33530 / DSM 19775 / NCTC 10195 / G37) (Mycoplasmoides genitalium).